The primary structure comprises 131 residues: MDKKTIYFICTGNSCRSQMAEGWGKEILGEGWNVYSAGIETHGVNPKAIEAMKEVDIDISNHTSDLIDNDILKQSDLVVTLCSDADNNCPILPPNVKKEHWGFDDPAGKEWSEFQRVRDEIKLAIEKFKLR.

Catalysis depends on nucleophile residues Cys10, Cys82, and Cys89. Cystine bridges form between Cys10–Cys82 and Cys82–Cys89.

This sequence belongs to the low molecular weight phosphotyrosine protein phosphatase family. Thioredoxin-coupled ArsC subfamily.

Its subcellular location is the cytoplasm. It catalyses the reaction arsenate + [thioredoxin]-dithiol + H(+) = arsenite + [thioredoxin]-disulfide + H2O. In terms of biological role, catalyzes the reduction of arsenate [As(V)] to arsenite [As(III)]. The chain is Arsenate reductase from Staphylococcus aureus (strain N315).